Here is a 222-residue protein sequence, read N- to C-terminus: Phosphoenolpyruvate guanylyltransferase (222 aa).

T147, G163, and S166 together coordinate phosphoenolpyruvate.

Belongs to the CofC family.

The catalysed reaction is phosphoenolpyruvate + GTP + H(+) = enolpyruvoyl-2-diphospho-5'-guanosine + diphosphate. Its pathway is cofactor biosynthesis; coenzyme F420 biosynthesis. Functionally, guanylyltransferase that catalyzes the activation of phosphoenolpyruvate (PEP) as enolpyruvoyl-2-diphospho-5'-guanosine, via the condensation of PEP with GTP. It is involved in the biosynthesis of coenzyme F420, a hydride carrier cofactor. This chain is Phosphoenolpyruvate guanylyltransferase, found in Streptosporangium roseum (strain ATCC 12428 / DSM 43021 / JCM 3005 / KCTC 9067 / NCIMB 10171 / NRRL 2505 / NI 9100).